The chain runs to 303 residues: ATP synthase gamma chain (303 aa).

This sequence belongs to the ATPase gamma chain family. As to quaternary structure, F-type ATPases have 2 components, CF(1) - the catalytic core - and CF(0) - the membrane proton channel. CF(1) has five subunits: alpha(3), beta(3), gamma(1), delta(1), epsilon(1). CF(0) has three main subunits: a, b and c.

The protein localises to the cell membrane. In terms of biological role, produces ATP from ADP in the presence of a proton gradient across the membrane. The gamma chain is believed to be important in regulating ATPase activity and the flow of protons through the CF(0) complex. The polypeptide is ATP synthase gamma chain (Oenococcus oeni (strain ATCC BAA-331 / PSU-1)).